The primary structure comprises 181 residues: Crossover junction endodeoxyribonuclease RuvC (181 aa).

Catalysis depends on residues Asp7, Glu67, and Asp139. Residues Asp7, Glu67, and Asp139 each coordinate Mg(2+).

This sequence belongs to the RuvC family. As to quaternary structure, homodimer which binds Holliday junction (HJ) DNA. The HJ becomes 2-fold symmetrical on binding to RuvC with unstacked arms; it has a different conformation from HJ DNA in complex with RuvA. In the full resolvosome a probable DNA-RuvA(4)-RuvB(12)-RuvC(2) complex forms which resolves the HJ. The cofactor is Mg(2+).

It is found in the cytoplasm. It catalyses the reaction Endonucleolytic cleavage at a junction such as a reciprocal single-stranded crossover between two homologous DNA duplexes (Holliday junction).. Functionally, the RuvA-RuvB-RuvC complex processes Holliday junction (HJ) DNA during genetic recombination and DNA repair. Endonuclease that resolves HJ intermediates. Cleaves cruciform DNA by making single-stranded nicks across the HJ at symmetrical positions within the homologous arms, yielding a 5'-phosphate and a 3'-hydroxyl group; requires a central core of homology in the junction. The consensus cleavage sequence is 5'-(A/T)TT(C/G)-3'. Cleavage occurs on the 3'-side of the TT dinucleotide at the point of strand exchange. HJ branch migration catalyzed by RuvA-RuvB allows RuvC to scan DNA until it finds its consensus sequence, where it cleaves and resolves the cruciform DNA. This Cupriavidus pinatubonensis (strain JMP 134 / LMG 1197) (Cupriavidus necator (strain JMP 134)) protein is Crossover junction endodeoxyribonuclease RuvC.